Reading from the N-terminus, the 286-residue chain is S-adenosylmethionine-dependent methyltransferase UmaA (286 aa).

S-adenosyl-L-methionine is bound by residues 32–33, 67–75, 93–98, and 122–123; these read YT, LLDIGCGWG, TLSRNQ, and WD. Cys268 is an active-site residue.

The protein belongs to the CFA/CMAS family.

Its subcellular location is the cytoplasm. Functionally, methyltransferase that modifies short-chain fatty acids. In vitro, catalyzes the transfer of the methyl group from S-adenosyl-L-methionine (SAM) to the double bond of phospholipid-linked oleic acid to produce tuberculostearic acid (10-methylstearic-acid or TSA). This chain is S-adenosylmethionine-dependent methyltransferase UmaA, found in Mycobacterium tuberculosis (strain ATCC 25618 / H37Rv).